A 164-amino-acid chain; its full sequence is Crossover junction endodeoxyribonuclease RuvC (164 aa).

Catalysis depends on residues Asp7, Glu67, and Asp140. Mg(2+) contacts are provided by Asp7, Glu67, and Asp140.

It belongs to the RuvC family. Homodimer which binds Holliday junction (HJ) DNA. The HJ becomes 2-fold symmetrical on binding to RuvC with unstacked arms; it has a different conformation from HJ DNA in complex with RuvA. In the full resolvosome a probable DNA-RuvA(4)-RuvB(12)-RuvC(2) complex forms which resolves the HJ. Mg(2+) is required as a cofactor.

It is found in the cytoplasm. It catalyses the reaction Endonucleolytic cleavage at a junction such as a reciprocal single-stranded crossover between two homologous DNA duplexes (Holliday junction).. The RuvA-RuvB-RuvC complex processes Holliday junction (HJ) DNA during genetic recombination and DNA repair. Endonuclease that resolves HJ intermediates. Cleaves cruciform DNA by making single-stranded nicks across the HJ at symmetrical positions within the homologous arms, yielding a 5'-phosphate and a 3'-hydroxyl group; requires a central core of homology in the junction. The consensus cleavage sequence is 5'-(A/T)TT(C/G)-3'. Cleavage occurs on the 3'-side of the TT dinucleotide at the point of strand exchange. HJ branch migration catalyzed by RuvA-RuvB allows RuvC to scan DNA until it finds its consensus sequence, where it cleaves and resolves the cruciform DNA. This chain is Crossover junction endodeoxyribonuclease RuvC, found in Alkaliphilus metalliredigens (strain QYMF).